Here is a 228-residue protein sequence, read N- to C-terminus: Imidazole glycerol phosphate synthase subunit HisH (228 aa).

Residues 4–218 (DIAVVDYGMG…VTWNPGEHAS (215 aa)) enclose the Glutamine amidotransferase type-1 domain. Cys-83 acts as the Nucleophile in catalysis. Catalysis depends on residues His-193 and Glu-195.

In terms of assembly, heterodimer of HisH and HisF.

The protein resides in the cytoplasm. The enzyme catalyses 5-[(5-phospho-1-deoxy-D-ribulos-1-ylimino)methylamino]-1-(5-phospho-beta-D-ribosyl)imidazole-4-carboxamide + L-glutamine = D-erythro-1-(imidazol-4-yl)glycerol 3-phosphate + 5-amino-1-(5-phospho-beta-D-ribosyl)imidazole-4-carboxamide + L-glutamate + H(+). It catalyses the reaction L-glutamine + H2O = L-glutamate + NH4(+). Its pathway is amino-acid biosynthesis; L-histidine biosynthesis; L-histidine from 5-phospho-alpha-D-ribose 1-diphosphate: step 5/9. IGPS catalyzes the conversion of PRFAR and glutamine to IGP, AICAR and glutamate. The HisH subunit catalyzes the hydrolysis of glutamine to glutamate and ammonia as part of the synthesis of IGP and AICAR. The resulting ammonia molecule is channeled to the active site of HisF. The sequence is that of Imidazole glycerol phosphate synthase subunit HisH from Thiobacillus denitrificans (strain ATCC 25259 / T1).